A 598-amino-acid polypeptide reads, in one-letter code: MQQSHIRNFSIIAHIDHGKSTLSDRLIQHCGGLTDREMAEQVLDSMDLEKERGITIKAQSVTLNYEARDGETYQLNFIDTPGHVDFTYEVSRSLAACEGALLVVDAGQGVEAQTLANCYTAIEMDMEVVPVLNKIDLPQAEPDRVAEEIEDIVGIDALDAVRCSAKTGIGIEDVLEVIVNKIPPPEGDREAPLKALIIDSWFDNYQGVVSLVRIVEGQLNKKDKIQIMSNGQTHQVDKIGVFTPKPLDTGILRAGEVGFIIAGIKDIQGAPVGDTITLAREPADAMLPGFKKVKPQVYAGIFPISSDDYEDFRDALAKLSLNDASLFYEPESSAALGFGFRIGFLGMLHMEIIQERLEREYDLGLITTAPTVIYEVETTKGETLTVDSPAKLPPVNDIAEIREPMVEANILVPQEYLGNVITLCVEKRGMQTNMTYHGKQVAVTYELPMAEVVLDFFDRLKSTSRGFASLDYNFKRFQTSDMVRVDILINGERVDALAVITHRENSQGRGRELVEKLRELIPRQMFDIAIQAAIGNHVVARSTVKQLRKNVIAKCYGGDVSRKKKLLQKQKEGKKRMKQVGNVELPQDAFLAVLKVGK.

The tr-type G domain occupies 4-186 (SHIRNFSIIA…VIVNKIPPPE (183 aa)). GTP is bound by residues 16-21 (DHGKST) and 133-136 (NKID).

The protein belongs to the TRAFAC class translation factor GTPase superfamily. Classic translation factor GTPase family. LepA subfamily.

It is found in the cell inner membrane. The enzyme catalyses GTP + H2O = GDP + phosphate + H(+). Its function is as follows. Required for accurate and efficient protein synthesis under certain stress conditions. May act as a fidelity factor of the translation reaction, by catalyzing a one-codon backward translocation of tRNAs on improperly translocated ribosomes. Back-translocation proceeds from a post-translocation (POST) complex to a pre-translocation (PRE) complex, thus giving elongation factor G a second chance to translocate the tRNAs correctly. Binds to ribosomes in a GTP-dependent manner. The chain is Elongation factor 4 from Alteromonas mediterranea (strain DSM 17117 / CIP 110805 / LMG 28347 / Deep ecotype).